A 365-amino-acid chain; its full sequence is Chaperone protein DnaJ (365 aa).

The J domain maps to 5–71; that stretch reads DFYEILGIAK…QKRQAYDQFG (67 aa). A CR-type zinc finger spans residues 128–206; sequence GTTVKIRIPK…CHGKGVVHKQ (79 aa). Zn(2+)-binding residues include Cys-141, Cys-144, Cys-158, Cys-161, Cys-180, Cys-183, Cys-194, and Cys-197. 4 CXXCXGXG motif repeats span residues 141–148, 158–165, 180–187, and 194–201; these read CDTCSGTG, CLTCGGAG, CNACSGTG, and CNNCHGKG.

Belongs to the DnaJ family. In terms of assembly, homodimer. Zn(2+) serves as cofactor.

It localises to the cytoplasm. Participates actively in the response to hyperosmotic and heat shock by preventing the aggregation of stress-denatured proteins and by disaggregating proteins, also in an autonomous, DnaK-independent fashion. Unfolded proteins bind initially to DnaJ; upon interaction with the DnaJ-bound protein, DnaK hydrolyzes its bound ATP, resulting in the formation of a stable complex. GrpE releases ADP from DnaK; ATP binding to DnaK triggers the release of the substrate protein, thus completing the reaction cycle. Several rounds of ATP-dependent interactions between DnaJ, DnaK and GrpE are required for fully efficient folding. Also involved, together with DnaK and GrpE, in the DNA replication of plasmids through activation of initiation proteins. This Vesicomyosocius okutanii subsp. Calyptogena okutanii (strain HA) protein is Chaperone protein DnaJ.